The primary structure comprises 332 residues: Glycerol-3-phosphate dehydrogenase [NAD(P)+] (332 aa).

3 residues coordinate NADPH: Ser-15, Trp-16, and Lys-110. Lys-110, Gly-137, and Ser-139 together coordinate sn-glycerol 3-phosphate. Residue Ala-141 participates in NADPH binding. Residues Lys-192, Asp-245, Ser-255, Arg-256, and Asn-257 each contribute to the sn-glycerol 3-phosphate site. The active-site Proton acceptor is the Lys-192. Arg-256 contributes to the NADPH binding site. Residue Glu-282 coordinates NADPH.

This sequence belongs to the NAD-dependent glycerol-3-phosphate dehydrogenase family.

Its subcellular location is the cytoplasm. The catalysed reaction is sn-glycerol 3-phosphate + NAD(+) = dihydroxyacetone phosphate + NADH + H(+). It carries out the reaction sn-glycerol 3-phosphate + NADP(+) = dihydroxyacetone phosphate + NADPH + H(+). Its pathway is membrane lipid metabolism; glycerophospholipid metabolism. In terms of biological role, catalyzes the reduction of the glycolytic intermediate dihydroxyacetone phosphate (DHAP) to sn-glycerol 3-phosphate (G3P), the key precursor for phospholipid synthesis. In Coxiella burnetii (strain CbuK_Q154) (Coxiella burnetii (strain Q154)), this protein is Glycerol-3-phosphate dehydrogenase [NAD(P)+].